The sequence spans 138 residues: Acidic phospholipase A2 6 (138 aa).

Positions 1–16 are cleaved as a signal peptide; that stretch reads MRTLWIMAVLLVGVEG. 7 disulfide bridges follow: Cys-42–Cys-131, Cys-44–Cys-60, Cys-59–Cys-111, Cys-65–Cys-138, Cys-66–Cys-104, Cys-73–Cys-97, and Cys-91–Cys-102. Tyr-43, Gly-45, and Gly-47 together coordinate Ca(2+). His-63 is a catalytic residue. Asp-64 is a Ca(2+) binding site. The active site involves Asp-105.

The protein belongs to the phospholipase A2 family. Group II subfamily. D49 sub-subfamily. As to quaternary structure, homodimer. It depends on Ca(2+) as a cofactor. In terms of tissue distribution, expressed by the venom gland.

It localises to the secreted. The enzyme catalyses a 1,2-diacyl-sn-glycero-3-phosphocholine + H2O = a 1-acyl-sn-glycero-3-phosphocholine + a fatty acid + H(+). Snake venom phospholipase A2 (PLA2) that has high lipolytic activity. PLA2 catalyzes the calcium-dependent hydrolysis of the 2-acyl groups in 3-sn-phosphoglycerides. The sequence is that of Acidic phospholipase A2 6 from Craspedocephalus gramineus (Bamboo pit viper).